The primary structure comprises 175 residues: MADEFLVVGQVVAAQGLKGEVRILPASDFPQRFTEPGSRWLRRRGHNEQQVQLLSGRQLPGKELFVVRFEGINDRTAAESLVHQEFLVAADDIPELEDGEFHVRDLQGLSVRLDTESDPIGVVVDLHHGGNDLLEIELKADGRRCLVPFVDAIVPQVELEEGWLLITPPKGLLDG.

A PRC barrel domain is found at 98–172 (DGEFHVRDLQ…WLLITPPKGL (75 aa)).

The protein belongs to the RimM family. As to quaternary structure, binds ribosomal protein uS19.

The protein resides in the cytoplasm. Its function is as follows. An accessory protein needed during the final step in the assembly of 30S ribosomal subunit, possibly for assembly of the head region. Essential for efficient processing of 16S rRNA. May be needed both before and after RbfA during the maturation of 16S rRNA. It has affinity for free ribosomal 30S subunits but not for 70S ribosomes. The sequence is that of Ribosome maturation factor RimM from Synechococcus sp. (strain RCC307).